The following is a 403-amino-acid chain: MTERVVLAYSGGLDTSVAIPYLAEQTGAEVIAVAVDVGQGGEDLDAIRQRALDCGAVESEVVDARDEFAAEYCLPAVRANSLYMDRYPLVSALSRPLIVKHLVAAARTHGGTIVSHGCTGKGNDQVRFEAGLGALAPDLRIVAPARDFAWTRDKAIAFAEEKGLPIDVTAKSPYSIDQNLWGRAVETGFLEDIWNPPIEDLYAYTADPAEPRDADEVVITFDAGNPVAIDGETVTPYQAIVELNRRAGAQGVGRLDMVEDRLVGIKSREVYEAPGAIALIAAHQELEAVTVERDLARFKRGVDQRWGELVYDGLWFSPLRAALDAFVNDAQQHVSGDVRLTLHGGRATVTGRRSEASLYDFGLATYDTGDTFDQSLAKGFVQLWGLPSKMSAARDARLGGAQS.

Residue 8 to 16 (AYSGGLDTS) coordinates ATP. Position 87 (Y87) interacts with L-citrulline. G117 provides a ligand contact to ATP. Positions 119, 123, and 124 each coordinate L-aspartate. N123 contributes to the L-citrulline binding site. Positions 127, 175, 259, and 271 each coordinate L-citrulline.

It belongs to the argininosuccinate synthase family. Type 1 subfamily. In terms of assembly, homotetramer.

It is found in the cytoplasm. It carries out the reaction L-citrulline + L-aspartate + ATP = 2-(N(omega)-L-arginino)succinate + AMP + diphosphate + H(+). The protein operates within amino-acid biosynthesis; L-arginine biosynthesis; L-arginine from L-ornithine and carbamoyl phosphate: step 2/3. This Salinispora arenicola (strain CNS-205) protein is Argininosuccinate synthase.